The primary structure comprises 371 residues: MPLADFHRSDPFTLGIELELQVVNPPGYDLSQDASTLIADVQHQLTVGEAKHDITESMLEIATGVCRDISHAQTQLSAIQQAVQRAALRHHLQICGGGSHPFHAWQRQQISDNPRYVKTVEHFGYLAQQATVFGQHVHVGCQSGDDALYLLHGLSRFVPHFIALNAASPWFDSTDSRFACSRLNRFSSYPDNGPMPWVADWQGFRRLFRQLSYTSMIDSMKDLHWDIRPSPQFGTVEVRVMDTPLTLAQAIHIAGFIQTLACWLLTERPFKHQPDDYLLYPFNRYQACRYGLDGTLTDVRSGEQRSIRQEILQLADRLAPFAHQLKATAALEAVVRQAKSPHSEAQQMRDFIANGGSLSGLVQKHCEIWAA.

It belongs to the glutamate--cysteine ligase type 2 family. YbdK subfamily. In terms of assembly, homodimer.

The enzyme catalyses L-cysteine + L-glutamate + ATP = gamma-L-glutamyl-L-cysteine + ADP + phosphate + H(+). ATP-dependent carboxylate-amine ligase which exhibits weak glutamate--cysteine ligase activity. In Klebsiella pneumoniae (strain 342), this protein is Putative glutamate--cysteine ligase 2.